Consider the following 445-residue polypeptide: GTPase Der (445 aa).

2 EngA-type G domains span residues 3–167 (PVIA…YAGQ) and 180–353 (VKIA…AAAM). Residues 9 to 16 (GRPNVGKS), 56 to 60 (DTGGF), 119 to 122 (NKAE), 186 to 193 (GRPNVGKS), 233 to 237 (DTAGL), and 298 to 301 (NKWD) contribute to the GTP site. A KH-like domain is found at 354–438 (AKLPTPKLTR…PLRIEFRSST (85 aa)).

It belongs to the TRAFAC class TrmE-Era-EngA-EngB-Septin-like GTPase superfamily. EngA (Der) GTPase family. Associates with the 50S ribosomal subunit.

In terms of biological role, GTPase that plays an essential role in the late steps of ribosome biogenesis. This chain is GTPase Der, found in Paraburkholderia xenovorans (strain LB400).